Here is a 343-residue protein sequence, read N- to C-terminus: CMP-N-acetylneuraminate-beta-galactosamide-alpha-2,3-sialyltransferase 1 (343 aa).

Topologically, residues 1 to 11 (MAPMRKKSTLK) are cytoplasmic. A helical; Signal-anchor for type II membrane protein transmembrane segment spans residues 12–27 (LLTLLVLFIFLTSFFL). N-linked (GlcNAc...) asparagine glycosylation occurs at Asn28. Residues 28–343 (NYSHTVVTTA…INKIRIFKGR (316 aa)) lie on the Lumenal side of the membrane. 3 disulfides stabilise this stretch: Cys62/Cys67, Cys64/Cys142, and Cys145/Cys284. Asn82 carries an N-linked (GlcNAc...) asparagine glycan. Gln108 is a substrate binding site. The N-linked (GlcNAc...) asparagine glycan is linked to Asn117. Substrate contacts are provided by Asn150, Asn173, Tyr233, Tyr269, Gly273, Gly293, His302, and His319. Asn326 is a glycosylation site (N-linked (GlcNAc...) asparagine).

Belongs to the glycosyltransferase 29 family. The soluble form derives from the membrane form by proteolytic processing. In terms of tissue distribution, the long isoform is abundant in salivary gland, liver, lung, and colon mucosa. Both long and short forms are detected in submaxillary salivary glands.

It localises to the golgi apparatus. It is found in the golgi stack membrane. Its subcellular location is the trans-Golgi network membrane. The protein localises to the secreted. It catalyses the reaction a beta-D-galactosyl-(1-&gt;3)-N-acetyl-alpha-D-galactosaminyl derivative + CMP-N-acetyl-beta-neuraminate = an N-acetyl-alpha-neuraminyl-(2-&gt;3)-beta-D-galactosyl-(1-&gt;3)-N-acetyl-alpha-D-galactosaminyl derivative + CMP + H(+). The catalysed reaction is a ganglioside GM1 (d18:1(4E)) + CMP-N-acetyl-beta-neuraminate = a ganglioside GD1a (d18:1(4E)) + CMP + H(+). It carries out the reaction ganglioside GM1 (d18:1(4E)/18:0) + CMP-N-acetyl-beta-neuraminate = ganglioside GD1a (18:1(4E)/18:0) + CMP + H(+). The enzyme catalyses a ganglioside GA1 (d18:1(4E)) + CMP-N-acetyl-beta-neuraminate = a ganglioside GM1b (d18:1(4E)) + CMP + H(+). It catalyses the reaction a ganglioside GD1b + CMP-N-acetyl-beta-neuraminate = a ganglioside GT1b + CMP + H(+). The catalysed reaction is a 3-O-[beta-D-galactosyl-(1-&gt;3)-N-acetyl-alpha-D-galactosaminyl]-L-threonyl-[protein] + CMP-N-acetyl-beta-neuraminate = a 3-O-[N-acetyl-alpha-neuraminyl-(2-&gt;3)-beta-D-galactosyl-(1-&gt;3)-N-acetyl-alpha-D-galactosaminyl]-L-threonyl-[protein] + CMP + H(+). It carries out the reaction a 3-O-[beta-D-galactosyl-(1-&gt;3)-N-acetyl-alpha-D-galactosaminyl]-L-seryl-[protein] + CMP-N-acetyl-beta-neuraminate = 3-O-[N-acetyl-alpha-neuraminyl-(2-&gt;3)-beta-D-galactosyl-(1-&gt;3)-N-acetyl-alpha-D-galactosaminyl]-L-seryl-[protein] + CMP + H(+). Its pathway is protein modification; protein glycosylation. It functions in the pathway glycolipid biosynthesis. Functionally, a beta-galactoside alpha2-&gt;3 sialyltransferase involved in terminal sialylation of glycoproteins and glycolipids. Catalyzes the transfer of sialic acid (N-acetyl-neuraminic acid; Neu5Ac) from the nucleotide sugar donor CMP-Neu5Ac onto acceptor Galbeta-(1-&gt;3)-GalNAc-terminated glycoconjugates through an alpha2-3 linkage. Adds sialic acid to the core 1 O-glycan, Galbeta-(1-&gt;3)-GalNAc-O-Ser/Thr, which is a major structure of mucin-type O-glycans. As part of a homeostatic mechanism that regulates CD8-positive T cell numbers, sialylates core 1 O-glycans of T cell glycoproteins, SPN/CD43 and PTPRC/CD45. Prevents premature apoptosis of thymic CD8-positive T cells prior to peripheral emigration, whereas in the secondary lymphoid organs controls the survival of CD8-positive memory T cells generated following a successful immune response. Transfers sialic acid to asialofetuin, presumably onto Galbeta-(1-&gt;3)-GalNAc-O-Ser. Sialylates GM1a, GA1 and GD1b gangliosides to form GD1a, GM1b and GT1b, respectively. In Sus scrofa (Pig), this protein is CMP-N-acetylneuraminate-beta-galactosamide-alpha-2,3-sialyltransferase 1 (ST3GAL1).